Reading from the N-terminus, the 139-residue chain is Actin-depolymerizing factor 1 (139 aa).

Residues 5 to 139 (ASGMAVCDEC…SMDIVKSRAL (135 aa)) enclose the ADF-H domain.

This sequence belongs to the actin-binding proteins ADF family.

Actin-depolymerizing protein. Severs actin filaments (F-actin) and binds to actin monomers. This Oryza sativa subsp. japonica (Rice) protein is Actin-depolymerizing factor 1 (ADF1).